A 123-amino-acid polypeptide reads, in one-letter code: Large ribosomal subunit protein bL17 (123 aa).

It belongs to the bacterial ribosomal protein bL17 family. Part of the 50S ribosomal subunit. Contacts protein L32.

The polypeptide is Large ribosomal subunit protein bL17 (Borreliella burgdorferi (strain ATCC 35210 / DSM 4680 / CIP 102532 / B31) (Borrelia burgdorferi)).